We begin with the raw amino-acid sequence, 124 residues long: Large ribosomal subunit protein bL12 (124 aa).

It belongs to the bacterial ribosomal protein bL12 family. Homodimer. Part of the ribosomal stalk of the 50S ribosomal subunit. Forms a multimeric L10(L12)X complex, where L10 forms an elongated spine to which 2 to 4 L12 dimers bind in a sequential fashion. Binds GTP-bound translation factors.

Forms part of the ribosomal stalk which helps the ribosome interact with GTP-bound translation factors. Is thus essential for accurate translation. This chain is Large ribosomal subunit protein bL12, found in Leptothrix cholodnii (strain ATCC 51168 / LMG 8142 / SP-6) (Leptothrix discophora (strain SP-6)).